The sequence spans 306 residues: Curved DNA-binding protein (306 aa).

One can recognise a J domain in the interval 5-69; it reads DYYAIMGVKP…QRRAEYDQMW (65 aa).

Its subcellular location is the cytoplasm. It is found in the nucleoid. Functionally, DNA-binding protein that preferentially recognizes a curved DNA sequence. It is probably a functional analog of DnaJ; displays overlapping activities with DnaJ, but functions under different conditions, probably acting as a molecular chaperone in an adaptive response to environmental stresses other than heat shock. Lacks autonomous chaperone activity; binds native substrates and targets them for recognition by DnaK. Its activity is inhibited by the binding of CbpM. This Shigella sonnei (strain Ss046) protein is Curved DNA-binding protein.